The following is a 101-amino-acid chain: Urease subunit beta (101 aa).

The protein belongs to the urease beta subunit family. As to quaternary structure, heterotrimer of UreA (gamma), UreB (beta) and UreC (alpha) subunits. Three heterotrimers associate to form the active enzyme.

It is found in the cytoplasm. It carries out the reaction urea + 2 H2O + H(+) = hydrogencarbonate + 2 NH4(+). Its pathway is nitrogen metabolism; urea degradation; CO(2) and NH(3) from urea (urease route): step 1/1. The protein is Urease subunit beta of Albidiferax ferrireducens (strain ATCC BAA-621 / DSM 15236 / T118) (Rhodoferax ferrireducens).